Reading from the N-terminus, the 356-residue chain is Dual-specificity RNA methyltransferase RlmN (356 aa).

Glu-92 functions as the Proton acceptor in the catalytic mechanism. The region spanning Glu-98 to Arg-327 is the Radical SAM core domain. Cys-105 and Cys-337 are oxidised to a cystine. Residues Cys-112, Cys-116, and Cys-119 each contribute to the [4Fe-4S] cluster site. Residues Gly-162–Glu-163, Ser-194, Ser-216–His-218, and Asn-294 contribute to the S-adenosyl-L-methionine site. Residue Cys-337 is the S-methylcysteine intermediate of the active site.

The protein belongs to the radical SAM superfamily. RlmN family. It depends on [4Fe-4S] cluster as a cofactor.

It localises to the cytoplasm. It catalyses the reaction adenosine(2503) in 23S rRNA + 2 reduced [2Fe-2S]-[ferredoxin] + 2 S-adenosyl-L-methionine = 2-methyladenosine(2503) in 23S rRNA + 5'-deoxyadenosine + L-methionine + 2 oxidized [2Fe-2S]-[ferredoxin] + S-adenosyl-L-homocysteine. It carries out the reaction adenosine(37) in tRNA + 2 reduced [2Fe-2S]-[ferredoxin] + 2 S-adenosyl-L-methionine = 2-methyladenosine(37) in tRNA + 5'-deoxyadenosine + L-methionine + 2 oxidized [2Fe-2S]-[ferredoxin] + S-adenosyl-L-homocysteine. Functionally, specifically methylates position 2 of adenine 2503 in 23S rRNA and position 2 of adenine 37 in tRNAs. m2A2503 modification seems to play a crucial role in the proofreading step occurring at the peptidyl transferase center and thus would serve to optimize ribosomal fidelity. The protein is Dual-specificity RNA methyltransferase RlmN of Ruthia magnifica subsp. Calyptogena magnifica.